The primary structure comprises 102 residues: Large ribosomal subunit protein bL21 (102 aa).

The protein belongs to the bacterial ribosomal protein bL21 family. In terms of assembly, part of the 50S ribosomal subunit. Contacts protein L20.

Functionally, this protein binds to 23S rRNA in the presence of protein L20. The chain is Large ribosomal subunit protein bL21 from Finegoldia magna (strain ATCC 29328 / DSM 20472 / WAL 2508) (Peptostreptococcus magnus).